We begin with the raw amino-acid sequence, 141 residues long: Hydroperoxide reductase (141 aa).

It belongs to the OsmC/Ohr family. In terms of assembly, homodimer.

The protein localises to the cytoplasm. Its function is as follows. Reduces organic and inorganic peroxide substrates. Protects the cell against oxidative stress. This chain is Hydroperoxide reductase, found in Mycoplasma genitalium (strain ATCC 33530 / DSM 19775 / NCTC 10195 / G37) (Mycoplasmoides genitalium).